The sequence spans 424 residues: Histidine--tRNA ligase (424 aa).

It belongs to the class-II aminoacyl-tRNA synthetase family. Homodimer.

It is found in the cytoplasm. The enzyme catalyses tRNA(His) + L-histidine + ATP = L-histidyl-tRNA(His) + AMP + diphosphate + H(+). The chain is Histidine--tRNA ligase from Shewanella sediminis (strain HAW-EB3).